Consider the following 355-residue polypeptide: Erythronate-4-phosphate dehydrogenase (355 aa).

Residues Ser45 and Thr66 each contribute to the substrate site. Asp146 contributes to the NAD(+) binding site. Arg206 is a catalytic residue. Asp229 is a binding site for NAD(+). Glu234 is a catalytic residue. Residue His251 is the Proton donor of the active site. Gly254 contacts NAD(+). Tyr255 contributes to the substrate binding site.

This sequence belongs to the D-isomer specific 2-hydroxyacid dehydrogenase family. PdxB subfamily. As to quaternary structure, homodimer.

The protein localises to the cytoplasm. It catalyses the reaction 4-phospho-D-erythronate + NAD(+) = (R)-3-hydroxy-2-oxo-4-phosphooxybutanoate + NADH + H(+). It functions in the pathway cofactor biosynthesis; pyridoxine 5'-phosphate biosynthesis; pyridoxine 5'-phosphate from D-erythrose 4-phosphate: step 2/5. Its function is as follows. Catalyzes the oxidation of erythronate-4-phosphate to 3-hydroxy-2-oxo-4-phosphonooxybutanoate. The chain is Erythronate-4-phosphate dehydrogenase from Acinetobacter baumannii (strain ATCC 17978 / DSM 105126 / CIP 53.77 / LMG 1025 / NCDC KC755 / 5377).